A 371-amino-acid chain; its full sequence is tRNA-specific 2-thiouridylase MnmA (371 aa).

ATP is bound by residues glycine 14–serine 21 and methionine 40. Residues asparagine 100–aspartate 102 form an interaction with target base in tRNA region. Cysteine 105 serves as the catalytic Nucleophile. The cysteines at positions 105 and 205 are disulfide-linked. Residue glycine 129 participates in ATP binding. Residues lysine 155–glutamine 157 are interaction with tRNA. Cysteine 205 functions as the Cysteine persulfide intermediate in the catalytic mechanism. The interval arginine 321–tyrosine 322 is interaction with tRNA.

It belongs to the MnmA/TRMU family.

The protein localises to the cytoplasm. It catalyses the reaction S-sulfanyl-L-cysteinyl-[protein] + uridine(34) in tRNA + AH2 + ATP = 2-thiouridine(34) in tRNA + L-cysteinyl-[protein] + A + AMP + diphosphate + H(+). Catalyzes the 2-thiolation of uridine at the wobble position (U34) of tRNA, leading to the formation of s(2)U34. The chain is tRNA-specific 2-thiouridylase MnmA from Bordetella pertussis (strain Tohama I / ATCC BAA-589 / NCTC 13251).